We begin with the raw amino-acid sequence, 1072 residues long: Carbamoyl phosphate synthase large chain (1072 aa).

A carboxyphosphate synthetic domain region spans residues 1-401 (MPKRLDINTI…SLLKAVRSLE (401 aa)). R129, R169, G175, G176, K208, I210, E215, G241, V242, H243, Q284, and E298 together coordinate ATP. The ATP-grasp 1 domain occupies 133–327 (RTLMQDLNEP…IAKLAAKIAV (195 aa)). Mg(2+) contacts are provided by Q284, E298, and N300. Residues Q284, E298, and N300 each contribute to the Mn(2+) site. The oligomerization domain stretch occupies residues 402-546 (LGIYHLELDH…YSTYADENES (145 aa)). The tract at residues 547–929 (IVTDRKSVVV…ALYKGLVASG (383 aa)) is carbamoyl phosphate synthetic domain. The region spanning 671 to 861 (EAALTKLGIP…MANVATKVIL (191 aa)) is the ATP-grasp 2 domain. Residues R707, R746, E752, G777, V778, H779, S780, Q820, and E832 each coordinate ATP. Residues Q820, E832, and N834 each coordinate Mg(2+). 3 residues coordinate Mn(2+): Q820, E832, and N834. The region spanning 930–1072 (INIPTHGSVI…QTKRHEVVHA (143 aa)) is the MGS-like domain. The segment at 930 to 1072 (INIPTHGSVI…QTKRHEVVHA (143 aa)) is allosteric domain.

This sequence belongs to the CarB family. As to quaternary structure, composed of two chains; the small (or glutamine) chain promotes the hydrolysis of glutamine to ammonia, which is used by the large (or ammonia) chain to synthesize carbamoyl phosphate. Tetramer of heterodimers (alpha,beta)4. Mg(2+) serves as cofactor. Requires Mn(2+) as cofactor.

The enzyme catalyses hydrogencarbonate + L-glutamine + 2 ATP + H2O = carbamoyl phosphate + L-glutamate + 2 ADP + phosphate + 2 H(+). It catalyses the reaction hydrogencarbonate + NH4(+) + 2 ATP = carbamoyl phosphate + 2 ADP + phosphate + 2 H(+). The protein operates within amino-acid biosynthesis; L-arginine biosynthesis; carbamoyl phosphate from bicarbonate: step 1/1. It functions in the pathway pyrimidine metabolism; UMP biosynthesis via de novo pathway; (S)-dihydroorotate from bicarbonate: step 1/3. Its function is as follows. Large subunit of the glutamine-dependent carbamoyl phosphate synthetase (CPSase). CPSase catalyzes the formation of carbamoyl phosphate from the ammonia moiety of glutamine, carbonate, and phosphate donated by ATP, constituting the first step of 2 biosynthetic pathways, one leading to arginine and/or urea and the other to pyrimidine nucleotides. The large subunit (synthetase) binds the substrates ammonia (free or transferred from glutamine from the small subunit), hydrogencarbonate and ATP and carries out an ATP-coupled ligase reaction, activating hydrogencarbonate by forming carboxy phosphate which reacts with ammonia to form carbamoyl phosphate. The polypeptide is Carbamoyl phosphate synthase large chain (Bacillus cereus (strain ATCC 14579 / DSM 31 / CCUG 7414 / JCM 2152 / NBRC 15305 / NCIMB 9373 / NCTC 2599 / NRRL B-3711)).